Consider the following 566-residue polypeptide: Berberine bridge enzyme-like D-2 (566 aa).

The N-terminal stretch at 1–33 is a signal peptide; that stretch reads MKRNISMSLQRLLIILMMISFLFTSLLVPSVSA. An intrachain disulfide couples Cys-42 to Cys-103. Asn-50 carries N-linked (GlcNAc...) asparagine glycosylation. The region spanning 81 to 257 is the FAD-binding PCMH-type domain; it reads SKPKPTVIIV…YAWKIRLLKV (177 aa). Position 118 is a pros-8alpha-FAD histidine (His-118). N-linked (GlcNAc...) asparagine glycans are attached at residues Asn-364, Asn-378, and Asn-503.

The protein belongs to the oxygen-dependent FAD-linked oxidoreductase family. The cofactor is FAD.

It localises to the vacuole. It participates in alkaloid biosynthesis; nicotine biosynthesis. In terms of biological role, involved in the biosynthesis of pyridine alkaloid natural products, leading mainly to the production of anabasine, anatabine, nicotine and nornicotine, effective deterrents against herbivores with antiparasitic and pesticide properties (neurotoxins); nornicotine serves as the precursor in the synthesis of the carcinogen compound N'-nitrosonornicotine (NNN). Catalyzes a late oxidation step subsequent to the pyridine ring condensation reaction in the biosynthesis of alkaloids. The chain is Berberine bridge enzyme-like D-2 from Nicotiana tabacum (Common tobacco).